The following is a 220-amino-acid chain: Zinc-finger homeodomain protein 2 (220 aa).

The span at 1-11 (MNFEDQEEDME) shows a compositional bias: acidic residues. The disordered stretch occupies residues 1 to 40 (MNFEDQEEDMEMSGVNPPCGYDSLSGEGATSSGGGGVGRS). The span at 31-40 (SSGGGGVGRS) shows a compositional bias: gly residues. The ZF-HD dimerization-type zinc-finger motif lies at 49–98 (YRECLKNHAVNIGGHAVDGCCEFMPSGEDGTLDALKCAACGCHRNFHRKE). The interval 100 to 160 (ESIGGRAHRV…SSSGGTTKRF (61 aa)) is disordered. Residues 157–220 (TKRFRTKFTA…NNKNSLGKKP (64 aa)) constitute a DNA-binding region (homeobox; atypical).

As to quaternary structure, homo or heterodimer. Interacts with ZHD1, ZHD3, ZHD4, ZHD5, ZHD6, ZHD7, ZHD8, ZHD9, ZHD10 and ZHD11. In terms of tissue distribution, mostly expressed in flowers and, to a lower extent, in inflorescence, stems and leaves.

The protein localises to the nucleus. Essential protein. Putative transcription factor. The protein is Zinc-finger homeodomain protein 2 (ZHD1) of Arabidopsis thaliana (Mouse-ear cress).